A 247-amino-acid polypeptide reads, in one-letter code: MLIIPAIDLKDGHCVRLKQGLMEDATVFSEDPGAMARHWVDQGGKRLHLVDLNGAFAGKPVNEGAIKAIVKAVGNDIPIQLGGGIRDLDTIERYLDDGISYVIVGTAAVKSPGFLHEACYAFPGQIMVGLDAKDGKVAVDGWSKLTGHDVIDLAKKFEDYGVEAVVYTDIGRDGMLTGVNIEATVALAQALTIPVIASGGVTNLDDVRRLAEVESEGIIGAITGRAIYEGTLNFTEAQALADELSQI.

D8 serves as the catalytic Proton acceptor. D131 functions as the Proton donor in the catalytic mechanism.

It belongs to the HisA/HisF family.

The protein localises to the cytoplasm. The enzyme catalyses 1-(5-phospho-beta-D-ribosyl)-5-[(5-phospho-beta-D-ribosylamino)methylideneamino]imidazole-4-carboxamide = 5-[(5-phospho-1-deoxy-D-ribulos-1-ylimino)methylamino]-1-(5-phospho-beta-D-ribosyl)imidazole-4-carboxamide. It functions in the pathway amino-acid biosynthesis; L-histidine biosynthesis; L-histidine from 5-phospho-alpha-D-ribose 1-diphosphate: step 4/9. The chain is 1-(5-phosphoribosyl)-5-[(5-phosphoribosylamino)methylideneamino] imidazole-4-carboxamide isomerase from Methylobacillus flagellatus (strain ATCC 51484 / DSM 6875 / VKM B-1610 / KT).